A 426-amino-acid chain; its full sequence is Serine--tRNA ligase (426 aa).

Threonine 229–glutamate 231 serves as a coordination point for L-serine. ATP contacts are provided by residues arginine 260–glutamate 262 and valine 276. Glutamate 283 lines the L-serine pocket. Position 350-353 (glutamate 350–serine 353) interacts with ATP. Threonine 386 contacts L-serine.

It belongs to the class-II aminoacyl-tRNA synthetase family. Type-1 seryl-tRNA synthetase subfamily. As to quaternary structure, homodimer. The tRNA molecule binds across the dimer.

Its subcellular location is the cytoplasm. It catalyses the reaction tRNA(Ser) + L-serine + ATP = L-seryl-tRNA(Ser) + AMP + diphosphate + H(+). It carries out the reaction tRNA(Sec) + L-serine + ATP = L-seryl-tRNA(Sec) + AMP + diphosphate + H(+). It participates in aminoacyl-tRNA biosynthesis; selenocysteinyl-tRNA(Sec) biosynthesis; L-seryl-tRNA(Sec) from L-serine and tRNA(Sec): step 1/1. Functionally, catalyzes the attachment of serine to tRNA(Ser). Is also able to aminoacylate tRNA(Sec) with serine, to form the misacylated tRNA L-seryl-tRNA(Sec), which will be further converted into selenocysteinyl-tRNA(Sec). The chain is Serine--tRNA ligase from Rhodopirellula baltica (strain DSM 10527 / NCIMB 13988 / SH1).